Consider the following 102-residue polypeptide: Small ribosomal subunit protein bS18c (102 aa).

Basic residues predominate over residues 1-19 (MDKTKRPLRKSKRSFRRRL). Residues 1–26 (MDKTKRPLRKSKRSFRRRLPPPIGSG) form a disordered region.

The protein belongs to the bacterial ribosomal protein bS18 family. Part of the 30S ribosomal subunit.

It is found in the plastid. Its subcellular location is the chloroplast. The chain is Small ribosomal subunit protein bS18c from Piper cenocladum (Ant piper).